The following is a 417-amino-acid chain: NADH-quinone oxidoreductase subunit D (417 aa).

It belongs to the complex I 49 kDa subunit family. In terms of assembly, NDH-1 is composed of 14 different subunits. Subunits NuoB, C, D, E, F, and G constitute the peripheral sector of the complex.

It localises to the cell inner membrane. It catalyses the reaction a quinone + NADH + 5 H(+)(in) = a quinol + NAD(+) + 4 H(+)(out). NDH-1 shuttles electrons from NADH, via FMN and iron-sulfur (Fe-S) centers, to quinones in the respiratory chain. The immediate electron acceptor for the enzyme in this species is believed to be ubiquinone. Couples the redox reaction to proton translocation (for every two electrons transferred, four hydrogen ions are translocated across the cytoplasmic membrane), and thus conserves the redox energy in a proton gradient. This Methylibium petroleiphilum (strain ATCC BAA-1232 / LMG 22953 / PM1) protein is NADH-quinone oxidoreductase subunit D.